Reading from the N-terminus, the 209-residue chain is MSKVHVFDHPLIQHKMTIMRKVETGTKQFRELVDEVASLMAYELTRDLPLTDVEIETPVTKTTQKMIEGKKLGIVPILRAGLGMVDGMLRMMPNVKVGHIGLYRDPETLEPTEYYLKLPTDVAERDFVVVDPMLATGGSAADAISSLKKQGAQSIKLACLCAAPEGVKRIQEEHPDVDIYLAALDEKLNDHGYIVPGLGDAGDRLFGTK.

Residues Arg79, Arg104, and 131–139 (DPMLATGGS) each bind 5-phospho-alpha-D-ribose 1-diphosphate. Uracil contacts are provided by residues Ile194 and 199–201 (GDA). Asp200 lines the 5-phospho-alpha-D-ribose 1-diphosphate pocket.

Belongs to the UPRTase family. Mg(2+) serves as cofactor.

It catalyses the reaction UMP + diphosphate = 5-phospho-alpha-D-ribose 1-diphosphate + uracil. The protein operates within pyrimidine metabolism; UMP biosynthesis via salvage pathway; UMP from uracil: step 1/1. Its activity is regulated as follows. Allosterically activated by GTP. Its function is as follows. Catalyzes the conversion of uracil and 5-phospho-alpha-D-ribose 1-diphosphate (PRPP) to UMP and diphosphate. The polypeptide is Uracil phosphoribosyltransferase (Exiguobacterium sibiricum (strain DSM 17290 / CCUG 55495 / CIP 109462 / JCM 13490 / 255-15)).